Consider the following 372-residue polypeptide: Putative actin-27 (372 aa).

This sequence belongs to the actin family.

The protein localises to the cytoplasm. The protein resides in the cytoskeleton. It catalyses the reaction ATP + H2O = ADP + phosphate + H(+). Its function is as follows. Actins are highly conserved proteins that are involved in various types of cell motility and are ubiquitously expressed in all eukaryotic cells. Multiple isoforms are involved in various cellular functions such as cytoskeleton structure, cell mobility, chromosome movement and muscle contraction. The chain is Putative actin-27 (act27) from Dictyostelium discoideum (Social amoeba).